The following is an 84-amino-acid chain: Sec-independent protein translocase protein TatA (84 aa).

A helical transmembrane segment spans residues 1 to 21; sequence MPNLGVPELLIIALVIFLLFG. Residues 42–57 show a composition bias toward basic and acidic residues; it reads EMDEMKTDGDKKELAE. The disordered stretch occupies residues 42 to 84; sequence EMDEMKTDGDKKELAEKQAPTAEQQQAQDLAQPKSEQPNEHNA. A compositionally biased stretch (polar residues) spans 62–77; that stretch reads TAEQQQAQDLAQPKSE.

This sequence belongs to the TatA/E family. The Tat system comprises two distinct complexes: a TatABC complex, containing multiple copies of TatA, TatB and TatC subunits, and a separate TatA complex, containing only TatA subunits. Substrates initially bind to the TatABC complex, which probably triggers association of the separate TatA complex to form the active translocon.

Its subcellular location is the cell membrane. Its function is as follows. Part of the twin-arginine translocation (Tat) system that transports large folded proteins containing a characteristic twin-arginine motif in their signal peptide across membranes. TatA could form the protein-conducting channel of the Tat system. The protein is Sec-independent protein translocase protein TatA of Corynebacterium jeikeium (strain K411).